A 74-amino-acid chain; its full sequence is uncharacterized protein (74 aa).

The disordered stretch occupies residues 55–74; the sequence is DENSESESKDGASWFKVYRG.

This is an uncharacterized protein from Listeria innocua serovar 6a (strain ATCC BAA-680 / CLIP 11262).